The primary structure comprises 127 residues: Small ribosomal subunit protein bS6 (127 aa).

The tract at residues 96-127 is disordered; the sequence is VTTPSPMMKEEKSRSLTPAAGDEGKPAEAAEA. The span at 117 to 127 shows a compositional bias: basic and acidic residues; sequence DEGKPAEAAEA.

The protein belongs to the bacterial ribosomal protein bS6 family.

Binds together with bS18 to 16S ribosomal RNA. The polypeptide is Small ribosomal subunit protein bS6 (Azoarcus sp. (strain BH72)).